The chain runs to 124 residues: MHELSYATSILNSILEVLKEQESLGKKVTGVSEINLEIGDLTLISFEQLKFAFEVIAENTLCKNAVLNTEMIKPKISCLNCGFLGILEVTDELEAKCPKCGSMNVRIKGGKEFNIKNAIIEFDD.

His-2 provides a ligand contact to Ni(2+). Zn(2+)-binding residues include Cys-78, Cys-81, Cys-97, and Cys-100.

This sequence belongs to the HypA/HybF family.

Its function is as follows. Involved in the maturation of [NiFe] hydrogenases. Required for nickel insertion into the metal center of the hydrogenase. In Methanococcus vannielii (strain ATCC 35089 / DSM 1224 / JCM 13029 / OCM 148 / SB), this protein is Hydrogenase maturation factor HypA.